The chain runs to 154 residues: 6,7-dimethyl-8-ribityllumazine synthase (154 aa).

5-amino-6-(D-ribitylamino)uracil-binding positions include Phe-23, 57–59, and 81–83; these read AFE and AVI. A (2S)-2-hydroxy-3-oxobutyl phosphate-binding site is contributed by 86 to 87; it reads AT. The active-site Proton donor is His-89. Position 114 (Phe-114) interacts with 5-amino-6-(D-ribitylamino)uracil. Arg-128 lines the (2S)-2-hydroxy-3-oxobutyl phosphate pocket.

It belongs to the DMRL synthase family.

It catalyses the reaction (2S)-2-hydroxy-3-oxobutyl phosphate + 5-amino-6-(D-ribitylamino)uracil = 6,7-dimethyl-8-(1-D-ribityl)lumazine + phosphate + 2 H2O + H(+). Its pathway is cofactor biosynthesis; riboflavin biosynthesis; riboflavin from 2-hydroxy-3-oxobutyl phosphate and 5-amino-6-(D-ribitylamino)uracil: step 1/2. Its function is as follows. Catalyzes the formation of 6,7-dimethyl-8-ribityllumazine by condensation of 5-amino-6-(D-ribitylamino)uracil with 3,4-dihydroxy-2-butanone 4-phosphate. This is the penultimate step in the biosynthesis of riboflavin. The protein is 6,7-dimethyl-8-ribityllumazine synthase of Syntrophus aciditrophicus (strain SB).